A 417-amino-acid chain; its full sequence is Tyrosine--tRNA ligase (417 aa).

Y40 contacts L-tyrosine. Positions 45–54 match the 'HIGH' region motif; sequence ATAASLHVGH. The L-tyrosine site is built by Y177 and Q181. Residues 237–241 carry the 'KMSKS' region motif; the sequence is KMGKS. K240 contacts ATP. In terms of domain architecture, S4 RNA-binding spans 351–414; that stretch reads ISVVQLITRS…AGRKRHALIK (64 aa).

This sequence belongs to the class-I aminoacyl-tRNA synthetase family. TyrS type 1 subfamily. As to quaternary structure, homodimer.

The protein localises to the cytoplasm. The enzyme catalyses tRNA(Tyr) + L-tyrosine + ATP = L-tyrosyl-tRNA(Tyr) + AMP + diphosphate + H(+). Catalyzes the attachment of tyrosine to tRNA(Tyr) in a two-step reaction: tyrosine is first activated by ATP to form Tyr-AMP and then transferred to the acceptor end of tRNA(Tyr). The sequence is that of Tyrosine--tRNA ligase from Dinoroseobacter shibae (strain DSM 16493 / NCIMB 14021 / DFL 12).